A 443-amino-acid polypeptide reads, in one-letter code: Probable D-serine dehydratase (443 aa).

The residue at position 116 (K116) is an N6-(pyridoxal phosphate)lysine.

This sequence belongs to the serine/threonine dehydratase family. DsdA subfamily. It depends on pyridoxal 5'-phosphate as a cofactor.

It catalyses the reaction D-serine = pyruvate + NH4(+). The protein is Probable D-serine dehydratase of Bacillus cereus (strain ATCC 14579 / DSM 31 / CCUG 7414 / JCM 2152 / NBRC 15305 / NCIMB 9373 / NCTC 2599 / NRRL B-3711).